Reading from the N-terminus, the 385-residue chain is Carbohydrate diacid regulator (385 aa).

The protein belongs to the CdaR family.

Seems to regulate the expression of the operons for the enzymes involved in D-galactarate, D-glucarate and D-glycerate utilization. This Escherichia coli (strain K12) protein is Carbohydrate diacid regulator (cdaR).